The following is a 612-amino-acid chain: UvrABC system protein C (612 aa).

Positions 20–98 (THSGVYRMLD…IKQHRPKYNI (79 aa)) constitute a GIY-YIG domain. In terms of domain architecture, UVR spans 208–243 (SSVLEEISAKMYQASEDMEYEKAQVYRDQLVVLRKL).

It belongs to the UvrC family. Interacts with UvrB in an incision complex.

The protein localises to the cytoplasm. Its function is as follows. The UvrABC repair system catalyzes the recognition and processing of DNA lesions. UvrC both incises the 5' and 3' sides of the lesion. The N-terminal half is responsible for the 3' incision and the C-terminal half is responsible for the 5' incision. The polypeptide is UvrABC system protein C (Francisella tularensis subsp. holarctica (strain FTNF002-00 / FTA)).